The sequence spans 861 residues: Nuclear pore complex protein NUP93A (861 aa).

The protein belongs to the nucleoporin interacting component (NIC) family. Part of the nuclear pore complex (NPC). The NPC has an eight-fold symmetrical structure comprising a central transport channel and two rings, the cytoplasmic and nuclear rings, to which eight filaments are attached. The cytoplasmic filaments have loose ends, while the nuclear filaments are joined in a distal ring, forming a nuclear basket. NPCs are highly dynamic in configuration and composition, and can be devided in 3 subcomplexes, the NUP62 subcomplex, the NUP107-160 subcomplex and the NUP93 subcomplex, containing approximately 30 different nucleoporin proteins.

The protein resides in the nucleus envelope. It is found in the nucleus. The protein localises to the nuclear pore complex. This chain is Nuclear pore complex protein NUP93A, found in Arabidopsis thaliana (Mouse-ear cress).